Consider the following 135-residue polypeptide: Photosystem II extrinsic protein U (135 aa).

The first 29 residues, 1–29, serve as a signal peptide directing secretion; that stretch reads MKRLLSWLTGALVMASLMAGLVMPSSVYA.

Belongs to the PsbU family. In terms of assembly, PSII is composed of 1 copy each of membrane proteins PsbA, PsbB, PsbC, PsbD, PsbE, PsbF, PsbH, PsbI, PsbJ, PsbK, PsbL, PsbM, PsbT, PsbX, PsbY, PsbZ, Psb30/Ycf12, peripheral proteins PsbO, CyanoQ (PsbQ), PsbU, PsbV and a large number of cofactors. It forms dimeric complexes.

It is found in the cellular thylakoid membrane. One of the extrinsic, lumenal subunits of photosystem II (PSII). PSII is a light-driven water plastoquinone oxidoreductase, using light energy to abstract electrons from H(2)O, generating a proton gradient subsequently used for ATP formation. The extrinsic proteins stabilize the structure of photosystem II oxygen-evolving complex (OEC), the ion environment of oxygen evolution and protect the OEC against heat-induced inactivation. The sequence is that of Photosystem II extrinsic protein U from Synechococcus sp. (strain CC9605).